Consider the following 459-residue polypeptide: DnaJ protein homolog XDJ1 (459 aa).

A J domain is found at 7-79 (GDRLYDVLGV…KSHYDLYGDD (73 aa)). The CR-type zinc finger occupies 146–240 (GKKLKFDLKR…CAGLGLLSKK (95 aa)). CXXCXGXG motif repeat units follow at residues 159-166 (CIKCHGSG), 181-188 (CESCAGKG), 208-215 (CEKCNGKG), and 228-235 (CPDCAGLG).

Its subcellular location is the mitochondrion outer membrane. The polypeptide is DnaJ protein homolog XDJ1 (XDJ1) (Saccharomyces cerevisiae (strain ATCC 204508 / S288c) (Baker's yeast)).